The primary structure comprises 311 residues: MAFKHKDIIGLQDLTREEIELLLNTAENLKEINERDIKKVPTLRGKTIVNLFYEASTRTRTSFEIAAKRLSADTINITASTSSVTKGETLSDTARNVLAMKPDIIVMRHAVSGAHHYLAQRVSCSVINAGDGAHEHPSQGLLDMLTMRQKFGKLDGLKVAIVGDITHSRVARSNIYGLTRMGAHVFLAGPPTMMPPGIERLGNVTVCRDMRAAITDADVVMMLRIQLERQGKTLLPTLKEYSRYFGLNNHLLQLAKKDAMVMHPGPINRGVELCSHVADGDQSHILKQVENGVAVRMSMLYHVSGGELPTE.

The carbamoyl phosphate site is built by arginine 58 and threonine 59. L-aspartate is bound at residue lysine 86. Carbamoyl phosphate is bound by residues arginine 108, histidine 136, and glutamine 139. Positions 169 and 224 each coordinate L-aspartate. Residues glycine 265 and proline 266 each contribute to the carbamoyl phosphate site.

This sequence belongs to the aspartate/ornithine carbamoyltransferase superfamily. ATCase family. Heterododecamer (2C3:3R2) of six catalytic PyrB chains organized as two trimers (C3), and six regulatory PyrI chains organized as three dimers (R2).

It catalyses the reaction carbamoyl phosphate + L-aspartate = N-carbamoyl-L-aspartate + phosphate + H(+). Its pathway is pyrimidine metabolism; UMP biosynthesis via de novo pathway; (S)-dihydroorotate from bicarbonate: step 2/3. Functionally, catalyzes the condensation of carbamoyl phosphate and aspartate to form carbamoyl aspartate and inorganic phosphate, the committed step in the de novo pyrimidine nucleotide biosynthesis pathway. In Geotalea uraniireducens (strain Rf4) (Geobacter uraniireducens), this protein is Aspartate carbamoyltransferase catalytic subunit.